A 529-amino-acid chain; its full sequence is Glucocorticoid modulatory element-binding protein 2 (529 aa).

The 83-residue stretch at 80–162 folds into the SAND domain; that stretch reads EEGENLEAEI…RKIMDSGELD (83 aa). Position 109 (C109) interacts with Zn(2+). Residues K135, K139, K142, and R153 each coordinate DNA. A Glycyl lysine isopeptide (Lys-Gly) (interchain with G-Cter in SUMO1); alternate cross-link involves residue K154. K154 is covalently cross-linked (Glycyl lysine isopeptide (Lys-Gly) (interchain with G-Cter in SUMO2); alternate). Zn(2+) contacts are provided by H166, C170, and C174. Residues 244 to 347 are a coiled coil; that stretch reads LLDEVIQEFQ…HLSNVLMTLT (104 aa). S372 bears the Phosphoserine mark.

As to quaternary structure, homodimer, and heterodimer of GMEB1 and GMEB2. Interacts with the glucocorticoid receptor (NR3C1). May interact with CREB-binding protein (CBP).

It is found in the nucleus. Its subcellular location is the cytoplasm. Its function is as follows. Trans-acting factor that binds to glucocorticoid modulatory elements (GME) present in the TAT (tyrosine aminotransferase) promoter and increases sensitivity to low concentrations of glucocorticoids. Also binds to the transferrin receptor promoter. This chain is Glucocorticoid modulatory element-binding protein 2 (Gmeb2), found in Rattus norvegicus (Rat).